A 902-amino-acid chain; its full sequence is Methionine--tRNA ligase, cytoplasmic (902 aa).

The GST C-terminal domain occupies 74-212 (GWEQDDLTNQ…QKQPQPQPPP (139 aa)). The short motif at 275-285 (PYVNNVPHLGN) is the 'HIGH' region element. A 'KMSKS' region motif is present at residues 595–599 (KFSKS). Lysine 598 serves as a coordination point for ATP. Serine 827 is subject to Phosphoserine. Threonine 837 is subject to Phosphothreonine. The WHEP-TRS domain occupies 843 to 899 (HIQTLTDEVTKQGNVVRELKAQKADKNQVAAEVAKLLDLKKQLALAEGKPIETPKGK).

This sequence belongs to the class-I aminoacyl-tRNA synthetase family. Monomer. Part of a multisubunit complex that groups tRNA ligases for Arg (RARS1), Asp (DARS1), Gln (QARS1), Ile (IARS1), Leu (LARS1), Lys (KARS1), Met (MARS1) the bifunctional ligase for Glu and Pro (EPRS1) and the auxiliary subunits AIMP1/p43, AIMP2/p38 and EEF1E1/p18. Forms a linear complex that contains MARS1, EEF1E1, EPRS1 and AIMP2 that is at the core of the multisubunit complex.

Its subcellular location is the cytoplasm. The protein resides in the cytosol. It is found in the nucleus. The protein localises to the nucleolus. It catalyses the reaction tRNA(Met) + L-methionine + ATP = L-methionyl-tRNA(Met) + AMP + diphosphate. In terms of biological role, catalyzes the specific attachment of an amino acid to its cognate tRNA in a 2 step reaction: the amino acid (AA) is first activated by ATP to form AA-AMP and then transferred to the acceptor end of the tRNA. Plays a role in the synthesis of ribosomal RNA in the nucleolus. This Mus musculus (Mouse) protein is Methionine--tRNA ligase, cytoplasmic (Mars1).